The following is a 487-amino-acid chain: MPRARWLQSAALMGALAVVLITAAPVAADAYQVPAPPSPTASCDVISPVAIPCVALGKFADAVAAECRRVGVPDARCVLPLAHRVTQAARDAYLQSWVHRTARFQDALQDPVPLRETQWLGTHNSFNSLSDSFTVSHADSNQQLSLAQQLDIDVRALELDLHYLPRLEGHGAPGVTVCHGLGPKNANLGCTVEPLLATVLPQIANWLNAPGHTEEVILLYLEDQLKNASAYESVVATLDQVLRRADGTSLIYRPNPARRATNGCVPLPLDVSREEIRASGARAVLVGSCAPGWSAAVFDWSGVELESGSNSGYRPYPACDATYGRGVYAWRLVRYYEDSTLATALANPTRPPANPQALTPPKVPAMTDCGVNLFGFDQLLPEDGRIQASLWSWAPDEPRAGAGACALQGADGRWVAASCGDPHPAACRDAAGRWTVTPAPVVFAGAALACTAIGADFTLPRTGNQNARLHAVAGPAGGAWVHYLLPP.

The next 3 membrane-spanning stretches (helical) occupy residues Ala-10–Ala-30, Val-45–Ala-65, and Ala-439–Leu-459.

It localises to the cell membrane. This is an uncharacterized protein from Mycobacterium tuberculosis (strain CDC 1551 / Oshkosh).